The primary structure comprises 312 residues: Olfactory receptor 51B6 (312 aa).

Residues 1–23 (MGLNKSASTFQLTGFPGMEKAHH) lie on the Extracellular side of the membrane. N-linked (GlcNAc...) asparagine glycosylation is present at N4. Residues 24-44 (WIFIPLLAAYISILLGNGTLL) traverse the membrane as a helical segment. Residues 45–52 (FLIRNDHN) are Cytoplasmic-facing. The helical transmembrane segment at 53–73 (LHEPMYYFLAMLAATDLGVTL) threads the bilayer. Residues 74–97 (TTMPTVLGVLWLDHREIGHGACFS) are Extracellular-facing. Residues C95 and C187 are joined by a disulfide bond. The chain crosses the membrane as a helical span at residues 98 to 118 (QAYFIHTLSVMESGVLLAMAY). Residues 119 to 137 (DCFITIRSPLRYTSILTNT) are Cytoplasmic-facing. Residues 138-158 (QVMKIGVRVLTRAGLSIMPIV) traverse the membrane as a helical segment. Over 159 to 194 (VRLHWFPYCRSHVLSHAFCLHQDVIKLACADITFNR) the chain is Extracellular. The helical transmembrane segment at 195-215 (LYPVVVLFAMVLLDFLIIFFS) threads the bilayer. The Cytoplasmic portion of the chain corresponds to 216 to 235 (YILILKTVMGIGSGGERAKA). The chain crosses the membrane as a helical span at residues 236-256 (LNTCVSHICCILVFYVTVVCL). Residues 257-271 (TFIHRFGKHVPHVVH) lie on the Extracellular side of the membrane. A helical membrane pass occupies residues 272 to 292 (ITMSYIHFLFPPFMNPFIYSI). Topologically, residues 293 to 312 (KTKQIQSGILRLFSLPHSRA) are cytoplasmic.

Belongs to the G-protein coupled receptor 1 family.

It localises to the cell membrane. In terms of biological role, odorant receptor. The sequence is that of Olfactory receptor 51B6 (OR51B6) from Homo sapiens (Human).